The chain runs to 593 residues: Acetyl-coenzyme A transferase nodX (593 aa).

The interval 572 to 593 is disordered; the sequence is DEDEQGSGFRSGSGLGSGSIAD. The segment covering 580-593 has biased composition (gly residues); it reads FRSGSGLGSGSIAD.

Belongs to the CoA-transferase III family.

Its pathway is secondary metabolite biosynthesis. In terms of biological role, acetyl-coenzyme A transferase; part of the gene cluster that mediates the biosynthesis of the indole diterpenes nodulisporic acids (NA). Nodulisporic acid A (NAA) and its chemically modified derivatives are of particular significance because of their highly potent insecticidal activity against blood-feeding arthropods and lack of observable adverse effects on mammals, in particular the tremogenicity associated with the paspaline-derived IDTs is not observed. The geranylgeranyl diphosphate (GGPP) synthase ggs1, localized outside of the cluster, is proposed to catalyze the first step in nodulisporic acid biosynthesis via conversion of farnesyl pyrophosphate and isopentyl pyrophosphate into geranylgeranyl pyrophosphate (GGPP). Condensation of indole-3-glycerol phosphate with GGPP by the prenyl transferase nodC then forms 3-geranylgeranylindole (3-GGI). Epoxidation by the FAD-dependent monooxygenase nodM leads to a single-epoxidized-GGI that is substrate of the terpene cyclase nodB for cyclization to yield emindole SB. The terminal methyl carbon, C28, of emindole SB is then oxidized by the cytochrome P450 monooxygenase nodW to produce nodulisporic acid F (NAF), the pentacyclic core of NAA. NAF is converted to nodulisporic acid E (NAE) via prenylation. This step is probably performed by one of the indole diterpene prenyltransferases nodD1 or nodD2. Several oxidation steps performed by the FAD-linked oxidoreductase nodO and one of the cytochrome P450 monooxygenase nodR, nodX or nodZ further convert NAE to nodulisporic acid D (NAD). NAD is substrate of cytochrome P450 monooxygenase nodJ to produce the precursor of nodulisporic acid C (NAC), converted to NAC by one of the indole diterpene prenyltransferases nodD1 or nodD2. The FAD-dependent monooxygenase nodY2 then oxidizes NAC to nodulisporic acid B (NAB). Finally NAB is converted to NAA by one of the cytochrome P450 monooxygenases nodR, nodX or nodZ. The polypeptide is Acetyl-coenzyme A transferase nodX (Hypoxylon pulicicidum).